A 343-amino-acid chain; its full sequence is N-acetyl-gamma-glutamyl-phosphate reductase (343 aa).

Cys147 is a catalytic residue.

This sequence belongs to the NAGSA dehydrogenase family. Type 1 subfamily.

It localises to the cytoplasm. It catalyses the reaction N-acetyl-L-glutamate 5-semialdehyde + phosphate + NADP(+) = N-acetyl-L-glutamyl 5-phosphate + NADPH + H(+). Its pathway is amino-acid biosynthesis; L-arginine biosynthesis; N(2)-acetyl-L-ornithine from L-glutamate: step 3/4. Its function is as follows. Catalyzes the NADPH-dependent reduction of N-acetyl-5-glutamyl phosphate to yield N-acetyl-L-glutamate 5-semialdehyde. In Listeria monocytogenes serotype 4b (strain F2365), this protein is N-acetyl-gamma-glutamyl-phosphate reductase.